Reading from the N-terminus, the 61-residue chain is Small ribosomal subunit protein uS14 (61 aa).

Zn(2+) contacts are provided by cysteine 24, cysteine 27, cysteine 40, and cysteine 43.

Belongs to the universal ribosomal protein uS14 family. Zinc-binding uS14 subfamily. Part of the 30S ribosomal subunit. Contacts proteins S3 and S10. The cofactor is Zn(2+).

Its function is as follows. Binds 16S rRNA, required for the assembly of 30S particles and may also be responsible for determining the conformation of the 16S rRNA at the A site. The sequence is that of Small ribosomal subunit protein uS14 from Clostridium botulinum (strain Alaska E43 / Type E3).